The chain runs to 334 residues: Nucleoid-associated protein PMI0825 (334 aa).

Belongs to the YejK family.

It localises to the cytoplasm. It is found in the nucleoid. This Proteus mirabilis (strain HI4320) protein is Nucleoid-associated protein PMI0825.